We begin with the raw amino-acid sequence, 239 residues long: mRNA turnover protein 4 homolog (239 aa).

The tract at residues 215-239 is disordered; sequence FQQMGDDLPESASESTEESDSEDDD. Residues Ser-225, Ser-229, and Ser-233 each carry the phosphoserine modification. The span at 229–239 shows a compositional bias: acidic residues; that stretch reads STEESDSEDDD.

It belongs to the universal ribosomal protein uL10 family. In terms of assembly, associates with the pre-60S ribosomal particle. Interacts with MINAS-60 (product of an alternative open reading frame of RBM10).

The protein localises to the nucleus. The protein resides in the nucleolus. Its subcellular location is the cytoplasm. Functionally, component of the ribosome assembly machinery. Nuclear paralog of the ribosomal protein P0, it binds pre-60S subunits at an early stage of assembly in the nucleolus, and is replaced by P0 in cytoplasmic pre-60S subunits and mature 80S ribosomes. This Homo sapiens (Human) protein is mRNA turnover protein 4 homolog (MRTO4).